The primary structure comprises 446 residues: Signal recognition particle 54 kDa protein (446 aa).

Residues 104–111, 184–188, and 242–245 each bind GTP; these read GLQGSGKT, DTAGR, and TKMD.

It belongs to the GTP-binding SRP family. SRP54 subfamily. In terms of assembly, part of the signal recognition particle protein translocation system, which is composed of SRP and FtsY. Archaeal SRP consists of a 7S RNA molecule of 300 nucleotides and two protein subunits: SRP54 and SRP19.

The protein resides in the cytoplasm. It catalyses the reaction GTP + H2O = GDP + phosphate + H(+). Functionally, involved in targeting and insertion of nascent membrane proteins into the cytoplasmic membrane. Binds to the hydrophobic signal sequence of the ribosome-nascent chain (RNC) as it emerges from the ribosomes. The SRP-RNC complex is then targeted to the cytoplasmic membrane where it interacts with the SRP receptor FtsY. This is Signal recognition particle 54 kDa protein from Methanocorpusculum labreanum (strain ATCC 43576 / DSM 4855 / Z).